The following is a 432-amino-acid chain: Asparagine--tRNA ligase (432 aa).

It belongs to the class-II aminoacyl-tRNA synthetase family. In terms of assembly, homodimer.

It localises to the cytoplasm. The catalysed reaction is tRNA(Asn) + L-asparagine + ATP = L-asparaginyl-tRNA(Asn) + AMP + diphosphate + H(+). The protein is Asparagine--tRNA ligase of Lactobacillus delbrueckii subsp. bulgaricus (strain ATCC 11842 / DSM 20081 / BCRC 10696 / JCM 1002 / NBRC 13953 / NCIMB 11778 / NCTC 12712 / WDCM 00102 / Lb 14).